The chain runs to 89 residues: Small ribosomal subunit protein bS20 (89 aa).

The tract at residues 1–26 is disordered; sequence MANIKASKKDALTSEKRRKKNSSRRS. The span at 16–26 shows a compositional bias: basic residues; it reads KRRKKNSSRRS.

It belongs to the bacterial ribosomal protein bS20 family.

Functionally, binds directly to 16S ribosomal RNA. This chain is Small ribosomal subunit protein bS20, found in Buchnera aphidicola subsp. Acyrthosiphon pisum (strain 5A).